The chain runs to 236 residues: 2,3,4,5-tetrahydropyridine-2,6-dicarboxylate N-acetyltransferase (236 aa).

It belongs to the transferase hexapeptide repeat family. DapH subfamily.

It catalyses the reaction (S)-2,3,4,5-tetrahydrodipicolinate + acetyl-CoA + H2O = L-2-acetamido-6-oxoheptanedioate + CoA. It functions in the pathway amino-acid biosynthesis; L-lysine biosynthesis via DAP pathway; LL-2,6-diaminopimelate from (S)-tetrahydrodipicolinate (acetylase route): step 1/3. In terms of biological role, catalyzes the transfer of an acetyl group from acetyl-CoA to tetrahydrodipicolinate. The protein is 2,3,4,5-tetrahydropyridine-2,6-dicarboxylate N-acetyltransferase of Lactiplantibacillus plantarum (strain ATCC BAA-793 / NCIMB 8826 / WCFS1) (Lactobacillus plantarum).